A 273-amino-acid polypeptide reads, in one-letter code: Putative phosphoenolpyruvate synthase regulatory protein (273 aa).

Residue 153–160 participates in ADP binding; it reads GVSRSGKT.

The protein belongs to the pyruvate, phosphate/water dikinase regulatory protein family. PSRP subfamily.

The enzyme catalyses [pyruvate, water dikinase] + ADP = [pyruvate, water dikinase]-phosphate + AMP + H(+). The catalysed reaction is [pyruvate, water dikinase]-phosphate + phosphate + H(+) = [pyruvate, water dikinase] + diphosphate. In terms of biological role, bifunctional serine/threonine kinase and phosphorylase involved in the regulation of the phosphoenolpyruvate synthase (PEPS) by catalyzing its phosphorylation/dephosphorylation. This chain is Putative phosphoenolpyruvate synthase regulatory protein, found in Polaromonas sp. (strain JS666 / ATCC BAA-500).